A 134-amino-acid polypeptide reads, in one-letter code: uncharacterized protein (134 aa).

A signal peptide spans 1–16 (MAKAVALLLAAIAASA).

This is an uncharacterized protein from Oryza sativa subsp. indica (Rice).